We begin with the raw amino-acid sequence, 269 residues long: Regulating synaptic membrane exocytosis protein 4 (269 aa).

The C2 domain occupies P115–Y233. Residues S254 and S257 each carry the phosphoserine modification.

Binds PPFIA3. Does not bind RAB3.

Its subcellular location is the synapse. Regulates synaptic membrane exocytosis. This chain is Regulating synaptic membrane exocytosis protein 4 (RIMS4), found in Homo sapiens (Human).